Reading from the N-terminus, the 390-residue chain is LIM/homeobox protein Lhx4 (390 aa).

LIM zinc-binding domains are found at residues proline 28–threonine 87 and lysine 88–asparagine 150. A DNA-binding region (homeobox) is located at residues alanine 157–lysine 216. Residues arginine 161–lysine 181 form an interaction with DNA region. The tract at residues arginine 199–lysine 211 is interaction with 5-mCpG DNA. Disordered regions lie at residues serine 230–aspartate 253 and alanine 356–phenylalanine 390.

The protein localises to the nucleus. Functionally, may play a critical role in the development of respiratory control mechanisms and in the normal growth and maturation of the lung. Binds preferentially to methylated DNA. The polypeptide is LIM/homeobox protein Lhx4 (LHX4) (Homo sapiens (Human)).